The following is a 352-amino-acid chain: Nicotinate-nucleotide--dimethylbenzimidazole phosphoribosyltransferase (352 aa).

Catalysis depends on glutamate 316, which acts as the Proton acceptor.

This sequence belongs to the CobT family.

It catalyses the reaction 5,6-dimethylbenzimidazole + nicotinate beta-D-ribonucleotide = alpha-ribazole 5'-phosphate + nicotinate + H(+). It participates in nucleoside biosynthesis; alpha-ribazole biosynthesis; alpha-ribazole from 5,6-dimethylbenzimidazole: step 1/2. In terms of biological role, catalyzes the synthesis of alpha-ribazole-5'-phosphate from nicotinate mononucleotide (NAMN) and 5,6-dimethylbenzimidazole (DMB). The polypeptide is Nicotinate-nucleotide--dimethylbenzimidazole phosphoribosyltransferase (Ruminiclostridium cellulolyticum (strain ATCC 35319 / DSM 5812 / JCM 6584 / H10) (Clostridium cellulolyticum)).